The chain runs to 518 residues: Centromere protein T (518 aa).

Residues 1–70 (MADLSSPDGD…RKHSHGTGSV (70 aa)) are disordered. A compositionally biased stretch (basic and acidic residues) spans 19-28 (HVLDTADSHT). A compositionally biased stretch (polar residues) spans 34-57 (STQTNPQRRRSQTPYSKRQGSQRK). T86 carries the post-translational modification Phosphothreonine. The interval 94–381 (ILLTAPESST…EPHQLFEPPP (288 aa)) is flexible stalk domain. Disordered stretches follow at residues 102-156 (STVM…KRKQ), 271-362 (VHHS…ELSS), and 375-412 (QLFE…HQDP). The span at 294 to 306 (TPSTGTRPQSQMS) shows a compositional bias: polar residues. Phosphoserine occurs at positions 313, 324, 333, 345, 346, 357, and 382. Residues 326-343 (ELREAVGSKEAEEPKDLE) show a composition bias toward basic and acidic residues. Residues 384 to 395 (GVAAVSSESVPA) show a composition bias toward low complexity.

This sequence belongs to the CENP-T/CNN1 family. In terms of assembly, component of the CENPA-CAD complex, composed of CENPI, CENPK, CENPL, CENPO, CENPP, CENPQ, CENPR and CENPS. The CENPA-CAD complex is probably recruited on centromeres by the CENPA-NAC complex, at least composed of CENPA, CENPC, CENPH, CENPM, CENPN, CENPT and CENPU. Identified in a centromeric complex containing histones H2A, H2B, H3 and H4, and at least CENPA, CENPB, CENPC, CENPT, CENPN, HJURP, SUPT16H, SSRP1 and RSF1. Interacts (via N-terminus) with the NDC80 complex. Heterodimer with CENPW; this dimer coassembles with CENPS-CENPX heterodimers at centromeres to form the tetrameric CENP-T-W-S-X complex. In terms of processing, dynamically phosphorylated during the cell cycle. Phosphorylated during G2 phase, metaphase and anaphase, but not during telophase or G1 phase.

Its subcellular location is the nucleus. It is found in the chromosome. The protein localises to the centromere. The protein resides in the kinetochore. In terms of biological role, component of the CENPA-NAC (nucleosome-associated) complex, a complex that plays a central role in assembly of kinetochore proteins, mitotic progression and chromosome segregation. The CENPA-NAC complex recruits the CENPA-CAD (nucleosome distal) complex and may be involved in incorporation of newly synthesized CENPA into centromeres. Part of a nucleosome-associated complex that binds specifically to histone H3-containing nucleosomes at the centromere, as opposed to nucleosomes containing CENPA. Component of the heterotetrameric CENP-T-W-S-X complex that binds and supercoils DNA, and plays an important role in kinetochore assembly. CENPT has a fundamental role in kinetochore assembly and function. It is one of the inner kinetochore proteins, with most further proteins binding downstream. Required for normal chromosome organization and normal progress through mitosis. The sequence is that of Centromere protein T (Cenpt) from Rattus norvegicus (Rat).